The sequence spans 113 residues: Prostate and testis expressed protein 2 (113 aa).

Residues 1–26 (MLVLFLLGTVFLLCPYWGELHDPIKA) form the signal peptide. The region spanning 29–110 (IMCYECKKYH…CDHSNYCNLP (82 aa)) is the UPAR/Ly6 domain. Disulfide bonds link cysteine 31–cysteine 57, cysteine 34–cysteine 42, cysteine 49–cysteine 80, and cysteine 84–cysteine 101.

Belongs to the PATE family. In terms of tissue distribution, isoform 1 and isoform 2 are expressed in prostate and testis. Isoform 2 is expressed in male and female brain at equivalent levels, in particular in cerebellum, cerebral cortex, corpus callosum, occipital, parrietal and temporal lobes, and pons, but not in amygdala, cerebral peduncle, hippocampus and thalamus.

It localises to the secreted. The sequence is that of Prostate and testis expressed protein 2 (PATE2) from Homo sapiens (Human).